The primary structure comprises 272 residues: 4-diphosphocytidyl-2-C-methyl-D-erythritol kinase (272 aa).

Lys14 is an active-site residue. 92-102 is an ATP binding site; the sequence is PMGGGLGGGSS. Asp132 is an active-site residue.

This sequence belongs to the GHMP kinase family. IspE subfamily.

It carries out the reaction 4-CDP-2-C-methyl-D-erythritol + ATP = 4-CDP-2-C-methyl-D-erythritol 2-phosphate + ADP + H(+). Its pathway is isoprenoid biosynthesis; isopentenyl diphosphate biosynthesis via DXP pathway; isopentenyl diphosphate from 1-deoxy-D-xylulose 5-phosphate: step 3/6. In terms of biological role, catalyzes the phosphorylation of the position 2 hydroxy group of 4-diphosphocytidyl-2C-methyl-D-erythritol. The polypeptide is 4-diphosphocytidyl-2-C-methyl-D-erythritol kinase (Fervidobacterium nodosum (strain ATCC 35602 / DSM 5306 / Rt17-B1)).